We begin with the raw amino-acid sequence, 213 residues long: Transcription antitermination protein NusB (213 aa).

It belongs to the NusB family.

Its function is as follows. Involved in transcription antitermination. Required for transcription of ribosomal RNA (rRNA) genes. Binds specifically to the boxA antiterminator sequence of the ribosomal RNA (rrn) operons. This Synechococcus elongatus (strain ATCC 33912 / PCC 7942 / FACHB-805) (Anacystis nidulans R2) protein is Transcription antitermination protein NusB.